Consider the following 670-residue polypeptide: Transketolase, chromosomal (670 aa).

A substrate-binding site is contributed by H32. Residues H72 and 120–122 (GPL) contribute to the thiamine diphosphate site. D161 lines the Mg(2+) pocket. Positions 162 and 191 each coordinate thiamine diphosphate. Mg(2+)-binding residues include N191 and I193. 3 residues coordinate substrate: H267, R364, and S391. Position 267 (H267) interacts with thiamine diphosphate. E417 functions as the Proton donor in the catalytic mechanism. F443 is a binding site for thiamine diphosphate. Substrate is bound by residues H467, D475, and R526.

It belongs to the transketolase family. In terms of assembly, homodimer. Mg(2+) is required as a cofactor. Ca(2+) serves as cofactor. Requires Mn(2+) as cofactor. The cofactor is Co(2+). It depends on thiamine diphosphate as a cofactor.

The enzyme catalyses D-sedoheptulose 7-phosphate + D-glyceraldehyde 3-phosphate = aldehydo-D-ribose 5-phosphate + D-xylulose 5-phosphate. It functions in the pathway carbohydrate biosynthesis; Calvin cycle. In terms of biological role, catalyzes the transfer of a two-carbon ketol group from a ketose donor to an aldose acceptor, via a covalent intermediate with the cofactor thiamine pyrophosphate. The protein is Transketolase, chromosomal (cbbTC) of Cupriavidus necator (strain ATCC 17699 / DSM 428 / KCTC 22496 / NCIMB 10442 / H16 / Stanier 337) (Ralstonia eutropha).